Reading from the N-terminus, the 329-residue chain is Replication factor C small subunit (329 aa).

ATP is bound at residue 51–58; that stretch reads GPPGTGKT.

It belongs to the activator 1 small subunits family. RfcS subfamily. Heteromultimer composed of small subunits (RfcS) and large subunits (RfcL).

Functionally, part of the RFC clamp loader complex which loads the PCNA sliding clamp onto DNA. The sequence is that of Replication factor C small subunit from Staphylothermus marinus (strain ATCC 43588 / DSM 3639 / JCM 9404 / F1).